We begin with the raw amino-acid sequence, 223 residues long: Alpha-S2-casein (223 aa).

The N-terminal stretch at 1–15 is a signal peptide; sequence MKFFIFTCLLAVALA. Residues S23, S24, S25, S72, S73, S74, S77, S145, S147, S151, and S159 each carry the phosphoserine modification. The stretch at residues 77-141 is a repeat; the sequence is SAEVAPEEIK…AGPFTPTVNR (65 aa). The segment at residues 159–223 is a repeat; it reads STEVFTKKTK…TNAIPYVRYL (65 aa).

It belongs to the alpha-casein family. Mammary gland specific. Secreted in milk.

It localises to the secreted. Functionally, important role in the capacity of milk to transport calcium phosphate. The chain is Alpha-S2-casein (CSN1S2) from Capra hircus (Goat).